A 419-amino-acid chain; its full sequence is NF-kappa-B essential modulator (419 aa).

The tract at residues 1 to 197 (MNRHLWKSQL…REALQQQHSV (197 aa)) is required for interaction with and ubiquitination by MARCHF2. A phosphoserine; by IKKB mark is found at Ser-31 and Ser-43. The interval 44-111 (EQGAPETLQR…KLVERLGLEK (68 aa)) is interaction with CHUK/IKBKB. Residues 49-356 (ETLQRCLEEN…CQESARIEDM (308 aa)) adopt a coiled-coil conformation. Position 68 is a phosphoserine (Ser-68). Ser-85 carries the post-translational modification Phosphoserine; by ATM. Glycyl lysine isopeptide (Lys-Gly) (interchain with G-Cter in ubiquitin) cross-links involve residues Lys-111, Lys-139, Lys-143, Lys-226, Lys-246, and Lys-264. The tract at residues 150–257 (LGELQESQSR…SVVGSERKRG (108 aa)) is interaction with TANK. Residues 242–350 (DNHIKSSVVG…SKLKASCQES (109 aa)) form a ubiquitin-binding (UBAN) region. The segment at 246-365 (KSSVVGSERK…MRKRHVEVSQ (120 aa)) is self-association. The required for interaction with TNFAIP3 stretch occupies residues 251–419 (GSERKRGMQL…LQIHVMECIE (169 aa)). Lys-277 is covalently cross-linked (Glycyl lysine isopeptide (Lys-Gly) (interchain with G-Cter in SUMO); alternate). A Glycyl lysine isopeptide (Lys-Gly) (interchain with G-Cter in ubiquitin); alternate cross-link involves residue Lys-277. Glycyl lysine isopeptide (Lys-Gly) (interchain with G-Cter in ubiquitin) cross-links involve residues Lys-283, Lys-285, Lys-292, and Lys-302. Residue Lys-309 forms a Glycyl lysine isopeptide (Lys-Gly) (interchain with G-Cter in SUMO); alternate linkage. Residue Lys-309 forms a Glycyl lysine isopeptide (Lys-Gly) (interchain with G-Cter in ubiquitin); alternate linkage. Glycyl lysine isopeptide (Lys-Gly) (interchain with G-Cter in ubiquitin) cross-links involve residues Lys-321 and Lys-325. A leucine-zipper region spans residues 322 to 343 (LAEKKELLQEQLEQLQREYSKL). Lys-326 participates in a covalent cross-link: Glycyl lysine isopeptide (Lys-Gly) (interchain with G-Cter in ubiquitin and interchain with MARCHF2). Positions 358 to 395 (KRHVEVSQAPLPPAPAYLSSPLALPSQRRSPPEEPPDF) are disordered. The segment covering 373 to 386 (AYLSSPLALPSQRR) has biased composition (low complexity). At Ser-376 the chain carries Phosphoserine; by IKKB. Residues 382 to 419 (PSQRRSPPEEPPDFCCPKCQYQAPDMDTLQIHVMECIE) form an interaction with CYLD region. At Ser-387 the chain carries Phosphoserine. The CCHC NOA-type zinc-finger motif lies at 389–419 (PEEPPDFCCPKCQYQAPDMDTLQIHVMECIE). Position 397 (Cys-397) interacts with Zn(2+). Lys-399 is covalently cross-linked (Glycyl lysine isopeptide (Lys-Gly) (interchain with G-Cter in ubiquitin)). Positions 400, 413, and 417 each coordinate Zn(2+).

As to quaternary structure, homodimer; disulfide-linked. Component of the I-kappa-B-kinase (IKK) core complex consisting of CHUK, IKBKB and IKBKG; probably four alpha/CHUK-beta/IKBKB dimers are associated with four gamma/IKBKG subunits. The IKK core complex seems to associate with regulatory or adapter proteins to form a IKK-signalosome holo-complex. The IKK complex associates with TERF2IP/RAP1, leading to promote IKK-mediated phosphorylation of RELA/p65. Part of a complex composed of NCOA2, NCOA3, CHUK/IKKA, IKBKB, IKBKG and CREBBP. Interacts with COPS3, CYLD, NALP2, TRPC4AP and PIDD1. Interacts with ATM; the complex is exported from the nucleus. Interacts with TRAF6. Interacts with IKBKE. Interacts with TANK; the interaction is enhanced by IKBKE and TBK1. Part of a ternary complex consisting of TANK, IKBKB and IKBKG. Interacts with ZFAND5. Interacts with RIPK2. Interacts with TNIP1 and TNFAIP3; TNIP1 facilitates the TNFAIP3-mediated de-ubiquitination of IKBKG. Interacts with TNFAIP3; the interaction is induced by TNF stimulation and by polyubiquitin. Binds (via UBAN region) polyubiquitin; binds both 'Lys-63'-linked and linear polyubiquitin, with higher affinity for linear ubiquitin. Interacts with NLRP10. Interacts with TANK; this interaction increases in response to DNA damage. Interacts with USP10; this interaction increases in response to DNA damage. Interacts with ZC3H12A; this interaction increases in response to DNA damage. Interacts with IFIT5; the interaction synergizes the recruitment of IKK to MAP3K7 and enhances IKK phosphorylation. Interacts with TRIM29; this interaction induces IKBKG/NEMO ubiquitination and proteolytic degradation. Interacts with TRIM13; this interaction leads to IKBKG/NEMO ubiquitination. Interacts with ARFIP2. Interacts with RIPK1. Interacts with (ubiquitinated) BCL10; interaction with polyubiquitinated BCL10 via both 'Lys-63'-linked and linear ubiquitin is required for TCR-induced NF-kappa-B activation. Interacts with MARCHF2; during the late stages of macrophage viral and bacterial infection; the interaction leads to ubiquitination and degradation of IKBKG/NEMO. In terms of assembly, (Microbial infection) Interacts with Molluscum contagiosum virus protein MC005; this interaction inhibits NF-kappa-B activation. (Microbial infection) Interacts with HTLV-1 Tax oncoprotein; the interaction activates IKBKG. As to quaternary structure, (Microbial infection) Interacts with Shigella flexneri ipah9.8; the interaction promotes TNIP1-dependent 'Lys-27'-linked polyubiquitination of IKBKG which perturbs NF-kappa-B activation during bacterial infection. In terms of assembly, (Microbial infection) Interacts with SARS coronavirus-2/SARS-CoV-2 virus protein ORF9B (via N-terminus); the interaction inhibits polyubiquitination through 'Lys-63' and NF-kappa-B activation. Post-translationally, phosphorylation at Ser-68 attenuates aminoterminal homodimerization. In terms of processing, polyubiquitinated on Lys-285 via 'Lys-63'-linked ubiquitin; the ubiquitination is mediated downstream of NOD2 and RIPK2 and probably plays a role in signaling by facilitating interactions with ubiquitin domain-containing proteins and activates the NF-kappa-B pathway. Polyubiquitinated on Lys-285 and Lys-399 through 'Lys-63'-linked ubiquitin; the ubiquitination is mediated by BCL10, MALT1 and TRAF6 and probably plays a role in signaling by facilitating interactions with ubiquitin domain-containing proteins and activates the NF-kappa-B pathway. Monoubiquitinated on Lys-277 and Lys-309; promotes nuclear export. Polyubiquitinated through 'Lys-27' by TRIM23; involved in antiviral innate and inflammatory responses. Linear polyubiquitinated on Lys-111, Lys-143, Lys-226, Lys-246, Lys-264, Lys-277, Lys-285, Lys-292, Lys-302, Lys-309 and Lys-326; the head-to-tail polyubiquitination is mediated by the LUBAC complex and plays a key role in NF-kappa-B activation. Deubiquitinated by USP10 in a TANK-dependent and -independent manner, leading to the negative regulation of NF-kappa-B signaling upon DNA damage. Ubiquitinated at Lys-326 by MARCHF2 following bacterial and viral infection which leads to its degradation. Polyubiquitinated via 'Lys-29'-linked ubiquitin; leading to lysosomal degradation. Sumoylated on Lys-277 and Lys-309 with SUMO1; the modification results in phosphorylation of Ser-85 by ATM leading to a replacement of the sumoylation by mono-ubiquitination on these residues. Post-translationally, neddylated by TRIM40, resulting in stabilization of NFKBIA and down-regulation of NF-kappa-B activity. In terms of processing, (Microbial infection) Cleaved by hepatitis A virus (HAV) protease 3C allowing the virus to disrupt the host innate immune signaling. (Microbial infection) Deubiquitinated by Epstein-Barr virus BPLF1 on both 'Lys-48' and 'Lys-63'-linked ubiquitin chains; leading to NF-kappa-B signaling inhibition. Post-translationally, (Microbial infection) Polyubiquitinated on Lys-309 and Lys-321 via 'Lys-27'-linked ubiquitin by Shigella flexneri E3 ubiquitin-protein ligase ipah9.8, leading to its degradation by the proteasome. In terms of processing, (Microbial infection) Polyubiquitination through 'Lys-63' is interrupted by interaction with SARS coronavirus-2/SARS-CoV-2 virus protein ORF9B which inhibits the NF-kappa-B pathway. As to expression, heart, brain, placenta, lung, liver, skeletal muscle, kidney and pancreas.

The protein resides in the cytoplasm. It localises to the nucleus. Functionally, regulatory subunit of the IKK core complex which phosphorylates inhibitors of NF-kappa-B thus leading to the dissociation of the inhibitor/NF-kappa-B complex and ultimately the degradation of the inhibitor. Its binding to scaffolding polyubiquitin plays a key role in IKK activation by multiple signaling receptor pathways. Can recognize and bind both 'Lys-63'-linked and linear polyubiquitin upon cell stimulation, with a much higher affinity for linear polyubiquitin. Could be implicated in NF-kappa-B-mediated protection from cytokine toxicity. Essential for viral activation of IRF3. Involved in TLR3- and IFIH1-mediated antiviral innate response; this function requires 'Lys-27'-linked polyubiquitination. (Microbial infection) Also considered to be a mediator for HTLV-1 Tax oncoprotein activation of NF-kappa-B. This chain is NF-kappa-B essential modulator, found in Homo sapiens (Human).